Here is a 354-residue protein sequence, read N- to C-terminus: Protein RecA (354 aa).

67–74 (GPESSGKT) contributes to the ATP binding site.

It belongs to the RecA family.

The protein localises to the cytoplasm. Functionally, can catalyze the hydrolysis of ATP in the presence of single-stranded DNA, the ATP-dependent uptake of single-stranded DNA by duplex DNA, and the ATP-dependent hybridization of homologous single-stranded DNAs. It interacts with LexA causing its activation and leading to its autocatalytic cleavage. This Yersinia enterocolitica serotype O:8 / biotype 1B (strain NCTC 13174 / 8081) protein is Protein RecA.